A 473-amino-acid polypeptide reads, in one-letter code: Photosystem II CP43 reaction center protein (473 aa).

Residues 1-14 constitute a propeptide that is removed on maturation; sequence MKTLYSLRRFYPVE. Thr-15 carries the post-translational modification N-acetylthreonine. Thr-15 carries the post-translational modification Phosphothreonine. 5 consecutive transmembrane segments (helical) span residues 69-93, 134-155, 178-200, 255-275, and 291-312; these read LFEVAHFVPEKPMYEQGLILLPHLA, LLGPETLEESFPFFGYVWKDRN, KALYFGGVYDTWAPGGGDVRKIT, KPFAWARRAFVWSGEAYLSYS, and WFNNTAYPSEFYGPTGPEASQA. Glu-367 is a binding site for [CaMn4O5] cluster. A helical transmembrane segment spans residues 447–471; sequence RARAAAAGFEKGIDRDFEPVLSMTP.

It belongs to the PsbB/PsbC family. PsbC subfamily. In terms of assembly, PSII is composed of 1 copy each of membrane proteins PsbA, PsbB, PsbC, PsbD, PsbE, PsbF, PsbH, PsbI, PsbJ, PsbK, PsbL, PsbM, PsbT, PsbX, PsbY, PsbZ, Psb30/Ycf12, at least 3 peripheral proteins of the oxygen-evolving complex and a large number of cofactors. It forms dimeric complexes. Binds multiple chlorophylls and provides some of the ligands for the Ca-4Mn-5O cluster of the oxygen-evolving complex. It may also provide a ligand for a Cl- that is required for oxygen evolution. PSII binds additional chlorophylls, carotenoids and specific lipids. serves as cofactor.

It localises to the plastid. Its subcellular location is the chloroplast thylakoid membrane. In terms of biological role, one of the components of the core complex of photosystem II (PSII). It binds chlorophyll and helps catalyze the primary light-induced photochemical processes of PSII. PSII is a light-driven water:plastoquinone oxidoreductase, using light energy to abstract electrons from H(2)O, generating O(2) and a proton gradient subsequently used for ATP formation. In Calycanthus floridus var. glaucus (Eastern sweetshrub), this protein is Photosystem II CP43 reaction center protein.